Consider the following 416-residue polypeptide: Transcription factor PIL1 (416 aa).

Disordered regions lie at residues 1 to 24 (MEAK…NIKP), 89 to 113 (VSQS…KLKS), and 197 to 231 (ESTY…KRST). Over residues 8-22 (SSSSEPNMISPSSNI) the composition is skewed to low complexity. Residues 95–124 (QQDKETNEQMNNNKKKLKSSKIEFERNVSK) adopt a coiled-coil conformation. A compositionally biased stretch (basic residues) spans 216–229 (VHARTRKPVTKRKR). One can recognise a bHLH domain in the interval 229 to 278 (RSTEVHKLYERKRRDEFNKKMRALQDLLPNCYKDDKASLLDEAIKYMRTL).

As to quaternary structure, homodimer. Interacts with APRR1/TOC1. Associates to PTAC12/HMR/PAP5 which acts as a transcriptional coactivator. Mainly expressed in stems, fruits and flowers and, to a lower extent, in leaves, seedlings and roots. Accumulates in etiolated seedlings.

It localises to the nucleus. Transcription factor. Involved in responses to transient and long-term shade. Required for the light-mediated inhibition of hypocotyl elongation. Necessary for rapid light-induced expression of the photomorphogenesis- and circadian-related gene APRR9. Seems to play a role in multiple PHYB responses, such as flowering transition and petiole elongation. The polypeptide is Transcription factor PIL1 (Arabidopsis thaliana (Mouse-ear cress)).